The sequence spans 380 residues: Tetratricopeptide repeat protein 19, mitochondrial (380 aa).

Residues 1 to 70 (MFRLLSWSLG…AALAWFSRPA (70 aa)) constitute a mitochondrion transit peptide. TPR repeat units lie at residues 136-169 (TYTY…LLGG), 179-212 (IEIS…LEEK), 237-270 (GMCL…SEEI), 279-312 (IVLM…ARQI), and 318-351 (HMVL…AKLK).

Belongs to the TTC19 family. In terms of assembly, binds to the mature mitochondrial complex III dimer, after the incorporation of the Rieske protein UQCRFS1. Interacts with UQCRC1 and UQCRFS1. Interacts with ZFYVE26 and CHMP4B. Post-translationally, proteolytically cleaved by PARL.

Its subcellular location is the mitochondrion inner membrane. Required for the preservation of the structural and functional integrity of mitochondrial respiratory complex III by allowing the physiological turnover of the Rieske protein UQCRFS1. Involved in the clearance of UQCRFS1 N-terminal fragments, which are produced upon incorporation of UQCRFS1 into the complex III and whose presence is detrimental for its catalytic activity. In Homo sapiens (Human), this protein is Tetratricopeptide repeat protein 19, mitochondrial (TTC19).